A 513-amino-acid polypeptide reads, in one-letter code: Protein PNS1 (513 aa).

Positions 1 to 13 (MSNNNYPPPPNPP) are enriched in pro residues. The tract at residues 1-41 (MSNNNYPPPPNPPNYQGEEQVHNVQPDLENNQEKYYAEQPQ) is disordered. Topologically, residues 1–60 (MSNNNYPPPPNPPNYQGEEQVHNVQPDLENNQEKYYAEQPQPSQQFEESFKIDKPKWNDW) are cytoplasmic. Residues 61-81 (PFTVFFLLTVAGFIAIAGITL) traverse the membrane as a helical segment. The Extracellular portion of the chain corresponds to 82–108 (NALKKTYGLQGSSIYNSTDTFTLNTNT). N-linked (GlcNAc...) asparagine glycosylation is present at asparagine 97. Residues 109–129 (IILFGFIIVVGVVLSVLIIVY) traverse the membrane as a helical segment. Residues 130–136 (ARMAPRV) lie on the Cytoplasmic side of the membrane. Residues 137 to 157 (FITTGLILNIILGLGTCIYYF) traverse the membrane as a helical segment. At 158–163 (VAHYYS) the chain is on the extracellular side. The chain crosses the membrane as a helical span at residues 164-182 (AAIVFLVFTLFTAWCYWSC). Over 183–210 (RHRIPFSATVLEITIDVMKRYPSTLITS) the chain is Cytoplasmic. Residues 211–231 (FIGIIVSGLFSTLFSVVIVAT) traverse the membrane as a helical segment. At 232–251 (YVKYDPDSQGCDVAGGGCSQ) the chain is on the extracellular side. The chain crosses the membrane as a helical span at residues 252 to 272 (SKLIGVLVFVFFAGYYISEVI). Residues 273–309 (KNVIHITIAGIYGTWYYLSNSDQGEPKHPALGAFKRA) are Cytoplasmic-facing. A helical membrane pass occupies residues 310 to 330 (MTYCFGSVCFGSLIVSIIQLI). Topologically, residues 331-346 (RSFVQILKQNAFGSGD) are extracellular. Residues 347–367 (NCAGCGFLILDFVLGFIDWIV) traverse the membrane as a helical segment. Topologically, residues 368 to 412 (RYFNHYAYCYVALYGKSYLKSARDTFDLIRFKGMDALINDCFINT) are cytoplasmic. Residues 413–433 (SLNLYSMFVGYVVALLAYFYL) form a helical membrane-spanning segment. Over 434 to 460 (KFTDPAYNSSGTFYAPVVAFSFLISGQ) the chain is Extracellular. Asparagine 441 is a glycosylation site (N-linked (GlcNAc...) asparagine). A helical transmembrane segment spans residues 461 to 481 (ITRIALTVISSGISTFFVALA). Topologically, residues 482 to 513 (KDPEVFQMTNRDRFDEIFRNYPQVLQKITSDH) are cytoplasmic.

It belongs to the CTL (choline transporter-like) family.

The protein localises to the cell membrane. In terms of biological role, probably involved in transport through the plasma membrane. This is Protein PNS1 (PNS1) from Debaryomyces hansenii (strain ATCC 36239 / CBS 767 / BCRC 21394 / JCM 1990 / NBRC 0083 / IGC 2968) (Yeast).